Here is a 185-residue protein sequence, read N- to C-terminus: Methanol dehydrogenase activator (185 aa).

The protein belongs to the Nudix hydrolase family. As to quaternary structure, homodimer. Mg(2+) is required as a cofactor.

Involved in the activation of the NAD-dependent methanol dehydrogenase (MDH). MDH activation by Act involves hydrolytic removal of the nicotinamide mononucleotide (NMN) moiety of the NAD cofactor, changing its ping-pong type of reaction mechanism into a ternary complex reaction mechanism. It requires the presence of magnesium ions and is also able to use ADP-ribose. This chain is Methanol dehydrogenase activator, found in Bacillus methanolicus.